The sequence spans 447 residues: Biotin carboxylase (447 aa).

A Biotin carboxylation domain is found at 1 to 447 (MKFDKILIAN…STSFVQEMNK (447 aa)). ATP contacts are provided by residues Lys-117, Lys-159, 165 to 166 (GG), 201 to 204 (EKFI), and His-209. One can recognise an ATP-grasp domain in the interval 121 to 318 (KETMQKAGVP…LLVEQIRIAQ (198 aa)). Lys-238 serves as a coordination point for hydrogencarbonate. Residues Glu-276 and Glu-289 each contribute to the ATP site. Positions 276, 289, and 291 each coordinate Mg(2+). Mn(2+) contacts are provided by Glu-276, Glu-289, and Asn-291. Positions 293, 296, and 339 each coordinate hydrogencarbonate. Arg-293 is an active-site residue. Arg-339 is a biotin binding site.

Acetyl-CoA carboxylase is a heterohexamer of biotin carboxyl carrier protein, biotin carboxylase and the two subunits of carboxyl transferase in a 2:2 complex. Mg(2+) serves as cofactor. Requires Mn(2+) as cofactor.

The catalysed reaction is N(6)-biotinyl-L-lysyl-[protein] + hydrogencarbonate + ATP = N(6)-carboxybiotinyl-L-lysyl-[protein] + ADP + phosphate + H(+). The protein operates within lipid metabolism; malonyl-CoA biosynthesis; malonyl-CoA from acetyl-CoA: step 1/1. This protein is a component of the acetyl coenzyme A carboxylase complex; first, biotin carboxylase catalyzes the carboxylation of the carrier protein and then the transcarboxylase transfers the carboxyl group to form malonyl-CoA. The chain is Biotin carboxylase (accC) from Nostoc sp. (strain PCC 7120 / SAG 25.82 / UTEX 2576).